The primary structure comprises 1238 residues: Protein translocase subunit SecA 1 (1238 aa).

ATP contacts are provided by residues Q107, 125–129, and D570; that span reads GEGKT. Positions 1194 to 1220 are disordered; the sequence is AAGSEGRAEGSVDTVRVEEPRIGRNAP. Positions 1199–1215 are enriched in basic and acidic residues; it reads GRAEGSVDTVRVEEPRI. Residues C1221, C1223, C1232, and C1233 each coordinate Zn(2+).

Belongs to the SecA family. In terms of assembly, monomer and homodimer. Part of the essential Sec protein translocation apparatus which comprises SecA, SecYEG and auxiliary proteins SecDF. Other proteins may also be involved. It depends on Zn(2+) as a cofactor.

Its subcellular location is the cell inner membrane. It is found in the cytoplasm. The catalysed reaction is ATP + H2O + cellular proteinSide 1 = ADP + phosphate + cellular proteinSide 2.. Its function is as follows. Part of the Sec protein translocase complex. Interacts with the SecYEG preprotein conducting channel. Has a central role in coupling the hydrolysis of ATP to the transfer of proteins into and across the cell membrane, serving as an ATP-driven molecular motor driving the stepwise translocation of polypeptide chains across the membrane. This chain is Protein translocase subunit SecA 1, found in Rhodopirellula baltica (strain DSM 10527 / NCIMB 13988 / SH1).